We begin with the raw amino-acid sequence, 224 residues long: UPF0758 protein ABO_0214 (224 aa).

Residues 102–224 form the MPN domain; sequence PLDNPDKAGQ…WVSLASRGAV (123 aa). Residues histidine 173, histidine 175, and aspartate 186 each coordinate Zn(2+). The short motif at 173–186 is the JAMM motif element; it reads HNHPSGVAEPSQSD.

The protein belongs to the UPF0758 family.

The protein is UPF0758 protein ABO_0214 of Alcanivorax borkumensis (strain ATCC 700651 / DSM 11573 / NCIMB 13689 / SK2).